The primary structure comprises 550 residues: Glucose-6-phosphate isomerase (550 aa).

D-glucose 6-phosphate is bound by residues 164–165 (GS), 215–220 (SKTFTT), Q359, E363, and H394. Residue E363 is the Proton donor of the active site. The active site involves H394. Phosphothreonine is present on T455. A D-glucose 6-phosphate-binding site is contributed by K516. K516 is an active-site residue.

It belongs to the GPI family. Homodimer.

It is found in the cytoplasm. It localises to the cytosol. It catalyses the reaction alpha-D-glucose 6-phosphate = beta-D-fructose 6-phosphate. It participates in carbohydrate degradation; glycolysis; D-glyceraldehyde 3-phosphate and glycerone phosphate from D-glucose: step 2/4. Functionally, in the cytoplasm, catalyzes the conversion of glucose-6-phosphate to fructose-6-phosphate, the second step in glycolysis, and the reverse reaction during gluconeogenesis. In Schizosaccharomyces pombe (strain 972 / ATCC 24843) (Fission yeast), this protein is Glucose-6-phosphate isomerase (pgi1).